The primary structure comprises 353 residues: F-box protein At2g14290 (353 aa).

The F-box domain occupies 6 to 58; it reads PRTWSELPPDLLGSIFHRLSFTDFHRAKIVCWNWNLSSKLTVPKKIRSPWLML.

The protein is F-box protein At2g14290 of Arabidopsis thaliana (Mouse-ear cress).